A 2554-amino-acid polypeptide reads, in one-letter code: DnaJ homolog subfamily C GRV2 (2554 aa).

2 disordered regions span residues 746–766 and 810–833; these read DVVD…KRLL and QRRA…GVDS. Positions 815–825 are enriched in polar residues; it reads DSSSEASNPQA. Coiled coils occupy residues 925–951 and 1518–1546; these read TRQE…EDIS and RTAS…LKRQ. A J domain is found at 1524 to 1606; the sequence is LNEEISNISK…AQCILYRRYG (83 aa). Disordered stretches follow at residues 1960–1994 and 2339–2366; these read IEDR…SSEG and SGEV…GQTP. The span at 1966–1977 shows a compositional bias: polar residues; that stretch reads SNDTPELQSSVA. A compositionally biased stretch (basic and acidic residues) spans 1982–1994; it reads IEEHSDHQPSSEG. Positions 2352-2366 are enriched in polar residues; it reads VNESTDPSSLPGQTP.

In terms of tissue distribution, constitutively expressed in roots, hypocotyls, leaves (e.g. vascular tissues), stems, flowers (e.g. petals and stigmas), siliques and pollen.

Its subcellular location is the endosome membrane. Its function is as follows. Required for endosome formation, vacuolar protein sorting and determination of the embryo growth axis. Necessary for the transport of proteins into protein storage vacuoles (PSVs). Participates in vesicle trafficking from the endosome to the central vacuole. Involved in the regulation of shoot phototropism and gravitropism, probably through the positioning of specialized amyloplasts (statoliths) in endodermal cells. The protein is DnaJ homolog subfamily C GRV2 (GRV2) of Arabidopsis thaliana (Mouse-ear cress).